The primary structure comprises 500 residues: MSPGLLLLGSAVLLAFGLCCTFVHRARSRYEHIPGPPRPSFLLGHLPCFWKKDEVGGRVLQDVFLDWAKKYGPVVRVNVFHKTSVIVTSPESVKKFLMSTKYNKDSKMYRALQTVFGERLFGQGLVSECNYERWHKQRRVIDLAFSRSSLVSLMETFNEKAEQLVEILEAKADGQTPVSMQDMLTYTAMDILAKAAFGMETSMLLGAQKPLSQAVKLMLEGITASRNTLAKFLPGKRKQLREVRESIRFLRQVGRDWVQRRREALKRGEEVPADILTQILKAEEGAQDDEGLLDNFVTFFIAGHETSANHLAFTVMELSRQPEIVARLQAEVDEVIGSKRYLDFEDLGRLQYLSQVLKESLRLYPPAWGTFRLLEEETLIDGVRVPGNTPLLFSTYVMGRMDTYFEDPLTFNPDRFGPGAPKPRFTYFPFSLGHRSCIGQQFAQMEVKVVMAKLLQRLEFRLVPGQRFGLQEQATLKPLDPVLCTLRPRGWQPAPPPPPC.

Residues 3 to 23 (PGLLLLGSAVLLAFGLCCTFV) traverse the membrane as a helical segment. Residue Cys437 participates in heme binding.

This sequence belongs to the cytochrome P450 family. Heme serves as cofactor. In terms of tissue distribution, expressed in brain. The mRNA was broadly distributed with higher levels in gray matter zones and lower levels in regions rich in white matter. Not detected in fetal sample but its expression increases linearly with age.

The protein resides in the endoplasmic reticulum membrane. It is found in the microsome membrane. Its subcellular location is the postsynapse. The protein localises to the presynapse. It localises to the cell projection. The protein resides in the dendrite. It catalyses the reaction cholesterol + reduced [NADPH--hemoprotein reductase] + O2 = (24S)-hydroxycholesterol + oxidized [NADPH--hemoprotein reductase] + H2O + H(+). The enzyme catalyses cholestanol + reduced [NADPH--hemoprotein reductase] + O2 = (24S)-hydroxycholestanol + oxidized [NADPH--hemoprotein reductase] + H2O + H(+). The catalysed reaction is 7-dehydrocholesterol + reduced [NADPH--hemoprotein reductase] + O2 = cholesta-5,7-dien-3beta,24S-diol + oxidized [NADPH--hemoprotein reductase] + H2O + H(+). It carries out the reaction 7-dehydrocholesterol + reduced [NADPH--hemoprotein reductase] + O2 = cholesta-5,7-dien-3beta,25-diol + oxidized [NADPH--hemoprotein reductase] + H2O + H(+). It catalyses the reaction desmosterol + reduced [NADPH--hemoprotein reductase] + O2 = (24Z),26-hydroxydesmosterol + oxidized [NADPH--hemoprotein reductase] + H2O + H(+). The enzyme catalyses desmosterol + reduced [NADPH--hemoprotein reductase] + O2 = (24S)-25-epoxycholesterol + oxidized [NADPH--hemoprotein reductase] + H2O + H(+). The catalysed reaction is 4beta-hydroxycholesterol + reduced [NADPH--hemoprotein reductase] + O2 = 4beta,24S-dihydroxycholesterol + oxidized [NADPH--hemoprotein reductase] + H2O + H(+). It carries out the reaction (24S)-hydroxycholesterol + reduced [NADPH--hemoprotein reductase] + O2 = (24S,25R)-24,26-dihydroxycholesterol + oxidized [NADPH--hemoprotein reductase] + H2O + H(+). It catalyses the reaction (24S)-hydroxycholesterol + reduced [NADPH--hemoprotein reductase] + O2 = 24S,25-dihydroxycholesterol + oxidized [NADPH--hemoprotein reductase] + H2O + H(+). The enzyme catalyses 7alpha-hydroxycholesterol + reduced [NADPH--hemoprotein reductase] + O2 = (24S)-7alpha-dihydroxycholesterol + oxidized [NADPH--hemoprotein reductase] + H2O + H(+). The catalysed reaction is progesterone + reduced [NADPH--hemoprotein reductase] + O2 = 17alpha-hydroxyprogesterone + oxidized [NADPH--hemoprotein reductase] + H2O + H(+). It carries out the reaction testosterone + reduced [NADPH--hemoprotein reductase] + O2 = 16beta,17beta-dihydroxyandrost-4-en-3-one + oxidized [NADPH--hemoprotein reductase] + H2O + H(+). It catalyses the reaction testosterone + reduced [NADPH--hemoprotein reductase] + O2 = 2-hydroxytestosterone + oxidized [NADPH--hemoprotein reductase] + H2O + H(+). The enzyme catalyses testosterone + reduced [NADPH--hemoprotein reductase] + O2 = 6beta,17beta-dihydroxyandrost-4-en-3-one + oxidized [NADPH--hemoprotein reductase] + H2O + H(+). It participates in steroid metabolism; cholesterol degradation. Its pathway is lipid metabolism; C21-steroid hormone metabolism. Functionally, P450 monooxygenase that plays a major role in cholesterol homeostasis in the brain. Primarily catalyzes the hydroxylation (with S stereochemistry) at C-24 of cholesterol side chain, triggering cholesterol diffusion out of neurons and its further degradation. By promoting constant cholesterol elimination in neurons, may activate the mevalonate pathway and coordinate the synthesis of new cholesterol and nonsterol isoprenoids involved in synaptic activity and learning. Further hydroxylates cholesterol derivatives and hormone steroids on both the ring and side chain of these molecules, converting them into active oxysterols involved in lipid signaling and biosynthesis. Acts as an epoxidase converting cholesta-5,24-dien-3beta-ol/desmosterol into (24S),25-epoxycholesterol, an abundant lipid ligand of nuclear NR1H2 and NR1H3 receptors shown to promote neurogenesis in developing brain. May also catalyze the oxidative metabolism of xenobiotics, such as clotrimazole. The protein is Cholesterol 24-hydroxylase of Homo sapiens (Human).